The following is a 307-amino-acid chain: Ribonuclease Z (307 aa).

Residues H63, H65, D67, H68, H140, D211, and H269 each coordinate Zn(2+). Catalysis depends on D67, which acts as the Proton acceptor.

The protein belongs to the RNase Z family. As to quaternary structure, homodimer. The cofactor is Zn(2+).

The catalysed reaction is Endonucleolytic cleavage of RNA, removing extra 3' nucleotides from tRNA precursor, generating 3' termini of tRNAs. A 3'-hydroxy group is left at the tRNA terminus and a 5'-phosphoryl group is left at the trailer molecule.. Zinc phosphodiesterase, which displays some tRNA 3'-processing endonuclease activity. Probably involved in tRNA maturation, by removing a 3'-trailer from precursor tRNA. The protein is Ribonuclease Z of Bacillus subtilis (strain 168).